Consider the following 444-residue polypeptide: Protein kinase C and casein kinase substrate in neurons protein 1 (444 aa).

Phosphoserine is present on residues Ser-2 and Ser-79. The 271-residue stretch at 13-283 folds into the F-BAR domain; the sequence is EETTDSFWEV…AIRGADAQDD (271 aa). Residues 26 to 275 adopt a coiled-coil conformation; it reads KRTVKRIDDG…QVYRELEQAI (250 aa). Thr-184 is subject to Phosphothreonine. The disordered stretch occupies residues 313 to 384; it reads AAKKEKQPKK…NGGSNPFDED (72 aa). A compositionally biased stretch (basic and acidic residues) spans 314-324; that stretch reads AKKEKQPKKAE. Residues 336–358 are compositionally biased toward polar residues; it reads ESTSQAGDRGSVSSYDRGQTYAT. Phosphoserine occurs at positions 346, 348, 349, 361, and 365. In terms of domain architecture, SH3 spans 385 to 444; the sequence is AKGVRVRALYDYDGQEQDELSFKAGDELTKLGEEDEQGWCRGRLDSGQLGLYPANYVEVV. Position 394 is a phosphotyrosine (Tyr-394). Residues Ser-405 and Ser-430 each carry the phosphoserine modification.

The protein belongs to the PACSIN family. In terms of assembly, homodimer. May form heterooligomers with other PACSINs. Interacts with MAPT. Interacts (via SH3 domain) with SYNJ1 and WASL. Interacts (via SH3 domain) with DNM1; the interaction is reduced by DNM1 phosphorylation. Interacts with DNM2 and DNM3. Interacts with both COBL and DBNL. Identified in a complex composed of COBL, PACSIN1 and WASL. Interacts with EHD1 and EHD3. Interacts with TRPV4. In terms of processing, phosphorylated by casein kinase 2 (CK2) and protein kinase C (PKC).

The protein localises to the cytoplasm. Its subcellular location is the cell projection. The protein resides in the synapse. It localises to the synaptosome. It is found in the ruffle membrane. The protein localises to the membrane. Its subcellular location is the cytoplasmic vesicle membrane. The protein resides in the cytosol. It localises to the cell membrane. Its function is as follows. Binds to membranes via its F-BAR domain and mediates membrane tubulation. Plays a role in the reorganization of the microtubule cytoskeleton via its interaction with MAPT; this decreases microtubule stability and inhibits MAPT-induced microtubule polymerization. Plays a role in cellular transport processes by recruiting DNM1, DNM2 and DNM3 to membranes. Plays a role in the reorganization of the actin cytoskeleton and in neuron morphogenesis via its interaction with COBL and WASL, and by recruiting COBL to the cell cortex. Plays a role in the regulation of neurite formation, neurite branching and the regulation of neurite length. Required for normal synaptic vesicle endocytosis; this process retrieves previously released neurotransmitters to accommodate multiple cycles of neurotransmission. Required for normal excitatory and inhibitory synaptic transmission. The protein is Protein kinase C and casein kinase substrate in neurons protein 1 (PACSIN1) of Bos taurus (Bovine).